Here is a 173-residue protein sequence, read N- to C-terminus: Large ribosomal subunit protein uL16 (173 aa).

It belongs to the universal ribosomal protein uL16 family.

The polypeptide is Large ribosomal subunit protein uL16 (Methanosarcina mazei (strain ATCC BAA-159 / DSM 3647 / Goe1 / Go1 / JCM 11833 / OCM 88) (Methanosarcina frisia)).